Here is a 761-residue protein sequence, read N- to C-terminus: Xaa-Pro dipeptidyl-peptidase (761 aa).

Residues serine 347, aspartate 467, and histidine 497 each act as charge relay system in the active site.

It belongs to the peptidase S15 family. In terms of assembly, homodimer.

It localises to the cytoplasm. It catalyses the reaction Hydrolyzes Xaa-Pro-|- bonds to release unblocked, N-terminal dipeptides from substrates including Ala-Pro-|-p-nitroanilide and (sequentially) Tyr-Pro-|-Phe-Pro-|-Gly-Pro-|-Ile.. Its function is as follows. Removes N-terminal dipeptides sequentially from polypeptides having unsubstituted N-termini provided that the penultimate residue is proline. This is Xaa-Pro dipeptidyl-peptidase from Streptococcus agalactiae serotype III (strain NEM316).